A 263-amino-acid chain; its full sequence is 3-deoxy-manno-octulosonate cytidylyltransferase 2 (263 aa).

This sequence belongs to the KdsB family.

It is found in the cytoplasm. The catalysed reaction is 3-deoxy-alpha-D-manno-oct-2-ulosonate + CTP = CMP-3-deoxy-beta-D-manno-octulosonate + diphosphate. Its pathway is nucleotide-sugar biosynthesis; CMP-3-deoxy-D-manno-octulosonate biosynthesis; CMP-3-deoxy-D-manno-octulosonate from 3-deoxy-D-manno-octulosonate and CTP: step 1/1. It participates in bacterial outer membrane biogenesis; lipopolysaccharide biosynthesis. In terms of biological role, activates KDO (a required 8-carbon sugar) for incorporation into bacterial lipopolysaccharide in Gram-negative bacteria. The polypeptide is 3-deoxy-manno-octulosonate cytidylyltransferase 2 (Paraburkholderia phytofirmans (strain DSM 17436 / LMG 22146 / PsJN) (Burkholderia phytofirmans)).